Reading from the N-terminus, the 64-residue chain is Large ribosomal subunit protein bL35 (64 aa).

Over residues 1 to 10 (MPKMKTNSAA) the composition is skewed to polar residues. Residues 1 to 64 (MPKMKTNSAA…SKNMKKLLGR (64 aa)) are disordered.

The protein belongs to the bacterial ribosomal protein bL35 family.

This Bifidobacterium adolescentis (strain ATCC 15703 / DSM 20083 / NCTC 11814 / E194a) protein is Large ribosomal subunit protein bL35.